The sequence spans 525 residues: GMP synthase [glutamine-hydrolyzing] (525 aa).

The 199-residue stretch at 9-207 (RILILDFGSQ…VLQICQCEPL (199 aa)) folds into the Glutamine amidotransferase type-1 domain. Catalysis depends on cysteine 86, which acts as the Nucleophile. Active-site residues include histidine 181 and glutamate 183. Positions 208–400 (WTPRNIIDQT…LGLPNAMLHR (193 aa)) constitute a GMPS ATP-PPase domain. 235–241 (SGGVDSA) is a binding site for ATP.

As to quaternary structure, homodimer.

It carries out the reaction XMP + L-glutamine + ATP + H2O = GMP + L-glutamate + AMP + diphosphate + 2 H(+). It functions in the pathway purine metabolism; GMP biosynthesis; GMP from XMP (L-Gln route): step 1/1. Its function is as follows. Catalyzes the synthesis of GMP from XMP. The sequence is that of GMP synthase [glutamine-hydrolyzing] from Hamiltonella defensa subsp. Acyrthosiphon pisum (strain 5AT).